A 348-amino-acid polypeptide reads, in one-letter code: Flagellar P-ring protein (348 aa).

An N-terminal signal peptide occupies residues 1 to 16 (MRVLTIFLLFMTSIFA).

Belongs to the FlgI family. In terms of assembly, the basal body constitutes a major portion of the flagellar organelle and consists of four rings (L,P,S, and M) mounted on a central rod.

It localises to the periplasm. The protein resides in the bacterial flagellum basal body. Assembles around the rod to form the L-ring and probably protects the motor/basal body from shearing forces during rotation. The protein is Flagellar P-ring protein of Campylobacter jejuni subsp. doylei (strain ATCC BAA-1458 / RM4099 / 269.97).